A 404-amino-acid chain; its full sequence is Cysteine desulfurase IscS (404 aa).

Pyridoxal 5'-phosphate contacts are provided by residues 75 to 76, Asn155, Gln183, and 203 to 205; these read AT and SGH. N6-(pyridoxal phosphate)lysine is present on Lys206. Residue Thr243 participates in pyridoxal 5'-phosphate binding. The active-site Cysteine persulfide intermediate is the Cys328. Cys328 lines the [2Fe-2S] cluster pocket.

Belongs to the class-V pyridoxal-phosphate-dependent aminotransferase family. NifS/IscS subfamily. Homodimer. Forms a heterotetramer with IscU, interacts with other sulfur acceptors. The cofactor is pyridoxal 5'-phosphate.

The protein resides in the cytoplasm. The catalysed reaction is (sulfur carrier)-H + L-cysteine = (sulfur carrier)-SH + L-alanine. It participates in cofactor biosynthesis; iron-sulfur cluster biosynthesis. Its function is as follows. Master enzyme that delivers sulfur to a number of partners involved in Fe-S cluster assembly, tRNA modification or cofactor biosynthesis. Catalyzes the removal of elemental sulfur atoms from cysteine to produce alanine. Functions as a sulfur delivery protein for Fe-S cluster synthesis onto IscU, an Fe-S scaffold assembly protein, as well as other S acceptor proteins. The chain is Cysteine desulfurase IscS from Actinobacillus succinogenes (strain ATCC 55618 / DSM 22257 / CCUG 43843 / 130Z).